The sequence spans 527 residues: Cyclin-L1 (527 aa).

Residues 1-37 form a disordered region; that stretch reads MASGPHPTSTAAAASASSAAPSAGGSSSGTTTTTTTT. Cyclin-like regions lie at residues 89–191 and 204–288; these read ELIQ…RVLK and KIIV…ETLR. Threonine 326 is subject to Phosphothreonine. The tract at residues 327–527 is disordered; sequence PALSTLGGFS…SRSGHGRHRR (201 aa). Residues serine 336 and serine 339 each carry the phosphoserine modification. Residues lysine 340 and lysine 348 each participate in a glycyl lysine isopeptide (Lys-Gly) (interchain with G-Cter in SUMO2) cross-link. Residues 343 to 353 are compositionally biased toward basic and acidic residues; sequence SPREVKAEEKS. Phosphoserine occurs at positions 353 and 356. The segment covering 362–371 has biased composition (basic and acidic residues); that stretch reads VKKEPEDRQQ. Residue lysine 363 forms a Glycyl lysine isopeptide (Lys-Gly) (interchain with G-Cter in SUMO2) linkage. Serine 375 is subject to Phosphoserine. Basic residues-rich tracts occupy residues 383–419, 439–453, 461–477, and 487–499; these read DSKR…RRSR, RRHH…KAKH, SNRH…RSQS, and KKHR…HRDR. The RS stretch occupies residues 391 to 433; it reads RSASRSRSRTRSRSRSHTPRRHYNNRRSRSGTYSSRSRSRSRS. Serine 446 is subject to Phosphoserine. The span at 500–509 shows a compositional bias: basic and acidic residues; the sequence is RERSRSFERS. A compositionally biased stretch (basic residues) spans 510-527; it reads HKGKHHGGSRSGHGRHRR.

This sequence belongs to the cyclin family. Cyclin L subfamily. Interacts with POLR2A via its hyperphosphorylated C-terminal domain (CTD). Interacts with CDK11A, CDK11B, CDK12 and CDK13. May form a ternary complex with CDK11B and casein kinase II (CKII). Interacts with pre-mRNA-splicing factors, including at least SRSF1, SRSF2 AND SRSF7/SLU7. As to expression, ubiquitous with higher level in liver; expressed in striatal neurons.

Its subcellular location is the nucleus speckle. The protein localises to the nucleus. It localises to the nucleoplasm. Functionally, involved in pre-mRNA splicing. Functions in association with cyclin-dependent kinases (CDKs). May play a role in the regulation of RNA polymerase II (pol II). Inhibited by the CDK-specific inhibitor CDKN1A/p21. The polypeptide is Cyclin-L1 (Ccnl1) (Rattus norvegicus (Rat)).